We begin with the raw amino-acid sequence, 718 residues long: Probable protein S-acyltransferase 19 (718 aa).

The next 2 helical transmembrane spans lie at 16 to 36 (VVAI…FAPF) and 41 to 61 (IWEY…FVLY). The tract at residues 100-125 (ETGSHLQSSPSVASRTSTLPNSSVKG) is disordered. Over residues 103–124 (SHLQSSPSVASRTSTLPNSSVK) the composition is skewed to polar residues. The 51-residue stretch at 174-224 (LFCTLCNAEVRKFSKHCRSCDKCVDCFDHHCRWLNNCVGRKNYMTFISLMA) folds into the DHHC domain. Catalysis depends on C204, which acts as the S-palmitoyl cysteine intermediate. 2 helical membrane passes run 222-242 (LMAV…AVIV) and 277-297 (AVSM…MLLI). Disordered stretches follow at residues 454-511 (SSVS…HVHE), 598-649 (PATT…QQQQ), and 664-718 (GPLV…GTRK). Composition is skewed to polar residues over residues 479-488 (CRNSYAPSQG) and 598-626 (PATT…TQNP). The span at 673–687 (DGLRHDGDSGREGQD) shows a compositional bias: basic and acidic residues.

This sequence belongs to the DHHC palmitoyltransferase family.

It is found in the cell membrane. It catalyses the reaction L-cysteinyl-[protein] + hexadecanoyl-CoA = S-hexadecanoyl-L-cysteinyl-[protein] + CoA. Its function is as follows. Palmitoyl acyltransferase. The protein is Probable protein S-acyltransferase 19 (PAT19) of Arabidopsis thaliana (Mouse-ear cress).